We begin with the raw amino-acid sequence, 510 residues long: 2,3-bisphosphoglycerate-independent phosphoglycerate mutase (510 aa).

Asp-14 and Ser-64 together coordinate Mn(2+). Ser-64 serves as the catalytic Phosphoserine intermediate. Substrate contacts are provided by residues His-125, 155 to 156 (RD), Arg-187, Arg-193, 259 to 262 (RADR), and Lys-332. Mn(2+)-binding residues include Asp-399, His-403, Asp-440, His-441, and His-459.

It belongs to the BPG-independent phosphoglycerate mutase family. As to quaternary structure, monomer. Mn(2+) serves as cofactor.

The catalysed reaction is (2R)-2-phosphoglycerate = (2R)-3-phosphoglycerate. The protein operates within carbohydrate degradation; glycolysis; pyruvate from D-glyceraldehyde 3-phosphate: step 3/5. Catalyzes the interconversion of 2-phosphoglycerate and 3-phosphoglycerate. The chain is 2,3-bisphosphoglycerate-independent phosphoglycerate mutase from Ectopseudomonas mendocina (strain ymp) (Pseudomonas mendocina).